Here is a 1196-residue protein sequence, read N- to C-terminus: DNA-directed RNA polymerase subunit beta (1196 aa).

The span at 1152-1165 (EEEIEMRDLEDEED) shows a compositional bias: acidic residues. The interval 1152–1196 (EEEIEMRDLEDEEDAKQADGLALSGDEAPEETASPDVERDAVTKE) is disordered. Basic and acidic residues predominate over residues 1187–1196 (DVERDAVTKE).

Belongs to the RNA polymerase beta chain family. As to quaternary structure, the RNAP catalytic core consists of 2 alpha, 1 beta, 1 beta' and 1 omega subunit. When a sigma factor is associated with the core the holoenzyme is formed, which can initiate transcription.

The enzyme catalyses RNA(n) + a ribonucleoside 5'-triphosphate = RNA(n+1) + diphosphate. DNA-dependent RNA polymerase catalyzes the transcription of DNA into RNA using the four ribonucleoside triphosphates as substrates. The polypeptide is DNA-directed RNA polymerase subunit beta (Bacillus velezensis (strain DSM 23117 / BGSC 10A6 / LMG 26770 / FZB42) (Bacillus amyloliquefaciens subsp. plantarum)).